A 964-amino-acid polypeptide reads, in one-letter code: Probable LRR receptor-like serine/threonine-protein kinase IRK (964 aa).

A signal peptide spans 1-20 (MYKALIFTVLLVSAVAPVRS). The Extracellular segment spans residues 21 to 603 (LDPPLNDDVL…GHKRILLSIS (583 aa)). LRR repeat units follow at residues 92 to 116 (LQFL…MLLS), 117 to 141 (LVNL…FFRQ), 143 to 166 (GSLR…ISSC), 168 to 190 (SLAA…IWSL), 191 to 214 (NTLR…IDRL), 215 to 238 (NNLR…IGSC), 240 to 261 (LLKT…TFQQ), 263 to 286 (SLCY…IGEM), 287 to 310 (RSLE…IGNL), 312 to 334 (ALKV…TANC), and 335 to 358 (INLL…LFQD). Asparagine 104 carries an N-linked (GlcNAc...) asparagine glycan. Asparagine 173 is a glycosylation site (N-linked (GlcNAc...) asparagine). N-linked (GlcNAc...) asparagine glycosylation occurs at asparagine 317. N-linked (GlcNAc...) asparagine glycosylation occurs at asparagine 370. LRR repeat units follow at residues 375–399 (IKKI…LGDL), 400–423 (RDLE…IGEL), 425–447 (HLSV…TGGA), 448–471 (VSLE…IKNC), 472–495 (SSLR…LAKL), 496–519 (TRLE…LANL), and 521–544 (YLHT…IFNG). Asparagine 470 carries N-linked (GlcNAc...) asparagine glycosylation. N-linked (GlcNAc...) asparagine glycans are attached at residues asparagine 526, asparagine 562, and asparagine 578. Residues 604–624 (SLIAISAAAAIVVGVIAITVL) traverse the membrane as a helical segment. The Cytoplasmic portion of the chain corresponds to 625–964 (NLRVRASTVS…SGSSDELGSS (340 aa)). The Protein kinase domain occupies 678–951 (LNKDCELGRG…GEAVNILRMI (274 aa)). Residues 684–692 (LGRGGFGAV) and lysine 706 each bind ATP.

Belongs to the protein kinase superfamily. Ser/Thr protein kinase family. Interacts with IRKI. Autophosphorylated. Highly expressed in root tips, shoot apices and developing flowers.

Its subcellular location is the cell membrane. It carries out the reaction L-seryl-[protein] + ATP = O-phospho-L-seryl-[protein] + ADP + H(+). The catalysed reaction is L-threonyl-[protein] + ATP = O-phospho-L-threonyl-[protein] + ADP + H(+). In Arabidopsis thaliana (Mouse-ear cress), this protein is Probable LRR receptor-like serine/threonine-protein kinase IRK.